A 185-amino-acid polypeptide reads, in one-letter code: Ribosome-recycling factor (185 aa).

Residues 128–158 are disordered; it reads VRNTRQDANNKVKKLEKDKEISEDESKKAQE.

This sequence belongs to the RRF family.

The protein resides in the cytoplasm. Responsible for the release of ribosomes from messenger RNA at the termination of protein biosynthesis. May increase the efficiency of translation by recycling ribosomes from one round of translation to another. In Helicobacter pylori (strain J99 / ATCC 700824) (Campylobacter pylori J99), this protein is Ribosome-recycling factor.